We begin with the raw amino-acid sequence, 910 residues long: Constitutive coactivator of peroxisome proliferator-activated receptor gamma (910 aa).

Disordered stretches follow at residues 333–416 (SDAE…VPMC), 443–483 (SEPR…ESRQ), and 863–910 (SHHA…WRRY). 3 stretches are compositionally biased toward basic and acidic residues: residues 335–351 (AESR…ESRQ), 360–375 (ESRR…EPRQ), and 396–411 (ESRR…EPRQ). The span at 872–890 (QGSSYHRTGSGYSRSSQGQ) shows a compositional bias: polar residues. Arg-885 carries the post-translational modification Omega-N-methylarginine. Basic and acidic residues predominate over residues 901-910 (QYEHDQWRRY).

This sequence belongs to the constitutive coactivator of PPAR-gamma family. Interacts with ESR1 and RXRA. Interacts with PPARG; in a ligand-independent manner. As to expression, widely expressed.

It is found in the nucleus. Functions as a transactivator of PPARG and ESR1. Functions in adipogenesis through PPARG activation. The chain is Constitutive coactivator of peroxisome proliferator-activated receptor gamma (FAM120B) from Homo sapiens (Human).